The following is a 263-amino-acid chain: Small ribosomal subunit protein uS2 (263 aa).

It belongs to the universal ribosomal protein uS2 family. In terms of assembly, component of the small ribosomal subunit. Mature ribosomes consist of a small (40S) and a large (60S) subunit. The 40S subunit contains about 33 different proteins and 1 molecule of RNA (18S). The 60S subunit contains about 49 different proteins and 3 molecules of RNA (25S, 5.8S and 5S). Interacts with RPS21.

The protein resides in the cytoplasm. Required for the assembly and/or stability of the 40S ribosomal subunit. Required for the processing of the 20S rRNA-precursor to mature 18S rRNA in a late step of the maturation of 40S ribosomal subunits. The protein is Small ribosomal subunit protein uS2 of Vairimorpha ceranae (strain BRL01) (Microsporidian parasite).